The chain runs to 103 residues: Thioredoxin-1 (103 aa).

Residues 2–103 (VKQVSDSSEF…KLEASIKANL (102 aa)) enclose the Thioredoxin domain. Catalysis depends on nucleophile residues C30 and C33. A disulfide bond links C30 and C33.

Belongs to the thioredoxin family.

Its function is as follows. Participates in various redox reactions through the reversible oxidation of its active center dithiol to a disulfide and catalyzes dithiol-disulfide exchange reactions. This Schizosaccharomyces pombe (strain 972 / ATCC 24843) (Fission yeast) protein is Thioredoxin-1 (trx1).